The chain runs to 364 residues: UDP-N-acetylglucosamine--N-acetylmuramyl-(pentapeptide) pyrophosphoryl-undecaprenol N-acetylglucosamine transferase (364 aa).

Residues 10–12, N124, R165, S193, I248, and Q293 each bind UDP-N-acetyl-alpha-D-glucosamine; that span reads TGG.

This sequence belongs to the glycosyltransferase 28 family. MurG subfamily.

The protein localises to the cell inner membrane. The enzyme catalyses di-trans,octa-cis-undecaprenyl diphospho-N-acetyl-alpha-D-muramoyl-L-alanyl-D-glutamyl-meso-2,6-diaminopimeloyl-D-alanyl-D-alanine + UDP-N-acetyl-alpha-D-glucosamine = di-trans,octa-cis-undecaprenyl diphospho-[N-acetyl-alpha-D-glucosaminyl-(1-&gt;4)]-N-acetyl-alpha-D-muramoyl-L-alanyl-D-glutamyl-meso-2,6-diaminopimeloyl-D-alanyl-D-alanine + UDP + H(+). It functions in the pathway cell wall biogenesis; peptidoglycan biosynthesis. Functionally, cell wall formation. Catalyzes the transfer of a GlcNAc subunit on undecaprenyl-pyrophosphoryl-MurNAc-pentapeptide (lipid intermediate I) to form undecaprenyl-pyrophosphoryl-MurNAc-(pentapeptide)GlcNAc (lipid intermediate II). This chain is UDP-N-acetylglucosamine--N-acetylmuramyl-(pentapeptide) pyrophosphoryl-undecaprenol N-acetylglucosamine transferase, found in Geobacter metallireducens (strain ATCC 53774 / DSM 7210 / GS-15).